The following is a 465-amino-acid chain: Alpha-2A adrenergic receptor (465 aa).

Residues 1–48 (MFRQEQPLAEGSFAPMGSLQPDAGNSSWNGTEAPGGGTRATPYSLQVT) lie on the Extracellular side of the membrane. 2 N-linked (GlcNAc...) asparagine glycosylation sites follow: Asn25 and Asn29. The chain crosses the membrane as a helical span at residues 49 to 74 (LTLVCLAGLLMLFTVFGNVLVIIAVF). Over 75-85 (TSRALKAPQNL) the chain is Cytoplasmic. A helical membrane pass occupies residues 86 to 111 (FLVSLASADILVATLVIPFSLANEVM). At 112–121 (GYWYFGKVWC) the chain is on the extracellular side. An intrachain disulfide couples Cys121 to Cys203. The helical transmembrane segment at 122–144 (EIYLALDVLFCTSSIVHLCAISL) threads the bilayer. At 145 to 164 (DRYWSITQAIEYNLKRTPRR) the chain is on the cytoplasmic side. A helical membrane pass occupies residues 165–188 (IKAIIVTVWVISAVISFPPLISIE). Residues 189-207 (KKGAGGGQQPAEPSCKIND) lie on the Extracellular side of the membrane. A helical membrane pass occupies residues 208–232 (QKWYVISSSIGSFFAPCLIMILVYV). At 233-389 (RIYQIAKRRT…RQNREKRFTF (157 aa)) the chain is on the cytoplasmic side. The disordered stretch occupies residues 242–378 (TRVPPSRRGP…GGGAKASRWR (137 aa)). The span at 313–330 (SSEHAERPPGPRRPDRGP) shows a compositional bias: basic and acidic residues. Ser346 carries the phosphoserine modification. A compositionally biased stretch (gly residues) spans 353-363 (GAAGPGASGSG). Arg368 bears the Omega-N-methylarginine mark. Residues 390–414 (VLAVVIGVFVVCWFPFFFTYTLIAV) form a helical membrane-spanning segment. The Extracellular portion of the chain corresponds to 415–424 (GCPVPSQLFN). A helical transmembrane segment spans residues 425-445 (FFFWFGYCNSSLNPVIYTIFN). Residues 446-465 (HDFRRAFKKILCRGDRKRIV) lie on the Cytoplasmic side of the membrane. Cys457 carries the S-palmitoyl cysteine lipid modification.

It belongs to the G-protein coupled receptor 1 family. Adrenergic receptor subfamily. ADRA2A sub-subfamily.

It is found in the cell membrane. Functionally, alpha-2 adrenergic receptors mediate the catecholamine-induced inhibition of adenylate cyclase through the action of G proteins. The sequence is that of Alpha-2A adrenergic receptor from Mus musculus (Mouse).